The primary structure comprises 600 residues: Elongation factor 4 (600 aa).

Positions 5–187 constitute a tr-type G domain; that stretch reads KYIRNFSIIA…AIINKLPSPK (183 aa). GTP-binding positions include 17–22 and 134–137; these read DHGKST and NKID.

This sequence belongs to the TRAFAC class translation factor GTPase superfamily. Classic translation factor GTPase family. LepA subfamily.

It is found in the cell inner membrane. The enzyme catalyses GTP + H2O = GDP + phosphate + H(+). Required for accurate and efficient protein synthesis under certain stress conditions. May act as a fidelity factor of the translation reaction, by catalyzing a one-codon backward translocation of tRNAs on improperly translocated ribosomes. Back-translocation proceeds from a post-translocation (POST) complex to a pre-translocation (PRE) complex, thus giving elongation factor G a second chance to translocate the tRNAs correctly. Binds to ribosomes in a GTP-dependent manner. The protein is Elongation factor 4 of Rickettsia typhi (strain ATCC VR-144 / Wilmington).